The following is a 639-amino-acid chain: 1-deoxy-D-xylulose-5-phosphate synthase (639 aa).

Residues His-79 and 120-122 contribute to the thiamine diphosphate site; that span reads AHS. Asp-151 is a Mg(2+) binding site. Residues 152-153, Asn-180, Tyr-289, and Glu-371 each bind thiamine diphosphate; that span reads GA. Asn-180 is a Mg(2+) binding site.

It belongs to the transketolase family. DXPS subfamily. Homodimer. It depends on Mg(2+) as a cofactor. The cofactor is thiamine diphosphate.

The enzyme catalyses D-glyceraldehyde 3-phosphate + pyruvate + H(+) = 1-deoxy-D-xylulose 5-phosphate + CO2. Its pathway is metabolic intermediate biosynthesis; 1-deoxy-D-xylulose 5-phosphate biosynthesis; 1-deoxy-D-xylulose 5-phosphate from D-glyceraldehyde 3-phosphate and pyruvate: step 1/1. Catalyzes the acyloin condensation reaction between C atoms 2 and 3 of pyruvate and glyceraldehyde 3-phosphate to yield 1-deoxy-D-xylulose-5-phosphate (DXP). This Rhizorhabdus wittichii (strain DSM 6014 / CCUG 31198 / JCM 15750 / NBRC 105917 / EY 4224 / RW1) (Sphingomonas wittichii) protein is 1-deoxy-D-xylulose-5-phosphate synthase.